A 110-amino-acid polypeptide reads, in one-letter code: Small ribosomal subunit protein bS18c (110 aa).

It belongs to the bacterial ribosomal protein bS18 family. As to quaternary structure, part of the 30S ribosomal subunit.

It is found in the plastid. The protein resides in the chloroplast. This Pisum sativum (Garden pea) protein is Small ribosomal subunit protein bS18c (rps18).